We begin with the raw amino-acid sequence, 709 residues long: Twinkle homolog protein, chloroplastic/mitochondrial (709 aa).

The N-terminal 16 residues, 1 to 16 (MRFLLRLPQIHFRKLS), are a transit peptide targeting the chloroplast and mitochondrion. One can recognise a Toprim domain in the interval 280–385 (SEVIIVEGEI…KKSEDEHFKD (106 aa)). Residues E286, D348, and D350 each coordinate Mg(2+). Residues 430–698 (THGHEYGVST…GSYSDSPVTP (269 aa)) enclose the SF4 helicase domain. 460–467 (GIPNSGKS) lines the ATP pocket.

The cofactor is Mg(2+). As to expression, expressed in young leaves and shoot apex tissues. Detected in developing tissues such as cotyledons, sepals, pistils and inflorescences. Nearly undetectable in mature leaves.

It localises to the plastid. The protein localises to the chloroplast. The protein resides in the mitochondrion. It catalyses the reaction ATP + H2O = ADP + phosphate + H(+). Functionally, has both DNA primase and DNA helicase activities and may be involved in organelle DNA replication. Capable of producing RNA primers of 9 to 18 bases from a single-stranded DNA template. The protein is Twinkle homolog protein, chloroplastic/mitochondrial of Arabidopsis thaliana (Mouse-ear cress).